The chain runs to 65 residues: Large ribosomal subunit protein bL35 (65 aa).

The segment at 1 to 28 (MPKLKTRKAAARRFKATGSGKIKRRKAF) is disordered.

This sequence belongs to the bacterial ribosomal protein bL35 family.

This is Large ribosomal subunit protein bL35 from Trichodesmium erythraeum (strain IMS101).